Here is a 388-residue protein sequence, read N- to C-terminus: MRYLTAGESHGPQLTAILEGVPAGLELRAEHINKELARRQKGYGRGRRMQIEKDEVKIVGGVRHGKTLGSPIALVVENRDFQHWQTIMAVEPIDDETEVKRKVTRPRPGHADLNGALKYGHRDMRNVLERSSARETTVRVAAGAVAKRLLEEVGIRVAGHVLEIGGVRAEKLDYRSLDELQKVTEESPVRCFDPEAGQKMMEAIDLAKKNGDSIGGIVEVIVEGVPAGVGSYVHYDRKLDAKIAAAIVSINAFKGVEFGIGFEAARRPGSEVHDEIIWSPEQGFSRRTNRAGGFEGGMTTGMPIVVRGVMKPIPTLYKPLGSVDIDTKEPFTASIERSDSCAVPAASVVAEAVVAWEVAAAIVEQFGQDRIDLIKENIERARRYAREF.

The NADP(+) site is built by R39 and R45. FMN contacts are provided by residues 130–132 (RSS), 251–252 (NA), G296, 311–315 (KPIPT), and R337.

Belongs to the chorismate synthase family. As to quaternary structure, homotetramer. The cofactor is FMNH2.

The catalysed reaction is 5-O-(1-carboxyvinyl)-3-phosphoshikimate = chorismate + phosphate. It participates in metabolic intermediate biosynthesis; chorismate biosynthesis; chorismate from D-erythrose 4-phosphate and phosphoenolpyruvate: step 7/7. Catalyzes the anti-1,4-elimination of the C-3 phosphate and the C-6 proR hydrogen from 5-enolpyruvylshikimate-3-phosphate (EPSP) to yield chorismate, which is the branch point compound that serves as the starting substrate for the three terminal pathways of aromatic amino acid biosynthesis. This reaction introduces a second double bond into the aromatic ring system. The protein is Chorismate synthase of Geobacillus thermodenitrificans (strain NG80-2).